The sequence spans 283 residues: Elongation factor Ts (283 aa).

The segment at 80–83 is involved in Mg(2+) ion dislocation from EF-Tu; sequence TDFV.

It belongs to the EF-Ts family.

Its subcellular location is the cytoplasm. In terms of biological role, associates with the EF-Tu.GDP complex and induces the exchange of GDP to GTP. It remains bound to the aminoacyl-tRNA.EF-Tu.GTP complex up to the GTP hydrolysis stage on the ribosome. In Haemophilus influenzae (strain PittGG), this protein is Elongation factor Ts.